A 510-amino-acid chain; its full sequence is GMP synthase [glutamine-hydrolyzing] (510 aa).

The 191-residue stretch at 5–195 (KILVLDFGGQ…LFKVCGVKGT (191 aa)) folds into the Glutamine amidotransferase type-1 domain. Catalysis depends on C82, which acts as the Nucleophile. Catalysis depends on residues H169 and E171. One can recognise a GMPS ATP-PPase domain in the interval 196–385 (WNMADFINEE…LGLPDEIVWR (190 aa)). 223 to 229 (SGGVDSA) is an ATP binding site.

Homodimer.

The catalysed reaction is XMP + L-glutamine + ATP + H2O = GMP + L-glutamate + AMP + diphosphate + 2 H(+). It functions in the pathway purine metabolism; GMP biosynthesis; GMP from XMP (L-Gln route): step 1/1. Its function is as follows. Catalyzes the synthesis of GMP from XMP. This chain is GMP synthase [glutamine-hydrolyzing], found in Halothermothrix orenii (strain H 168 / OCM 544 / DSM 9562).